The primary structure comprises 433 residues: Ascus wall endo-1,3-alpha-glucanase (433 aa).

Belongs to the glycosyl hydrolase 71 family.

The protein localises to the ascus epiplasm. It carries out the reaction Endohydrolysis of (1-&gt;3)-alpha-D-glucosidic linkages in isolichenin, pseudonigeran and nigeran.. In terms of biological role, promotes the release of ascospores from asci by hydrolyzing 1,3-alpha-glucan in the ascus wall. The polypeptide is Ascus wall endo-1,3-alpha-glucanase (Schizosaccharomyces pombe (strain 972 / ATCC 24843) (Fission yeast)).